The sequence spans 875 residues: Phospholipase DDHD1 (875 aa).

3 disordered regions span residues 1–30 (MNYP…LGSD), 101–153 (LRYY…GAAA), and 206–231 (RAQD…SVED). 2 positions are modified to phosphoserine: Ser8 and Ser11. The segment covering 130–140 (SGGGGAAGGGP) has biased composition (gly residues). A compositionally biased stretch (low complexity) spans 217 to 228 (GPASPAGPASSS). Residue Ser540 is part of the active site. A DDHD domain is found at 614–861 (LKFKVENFFC…ALFLLTFMYK (248 aa)). Position 726 is a phosphoserine (Ser726). Positions 770-804 (RSSASQPSETSRDSIEDEKKPVASPPMTTVATQTL) are disordered. Residues 779–790 (TSRDSIEDEKKP) are compositionally biased toward basic and acidic residues. A compositionally biased stretch (polar residues) spans 795 to 804 (PMTTVATQTL).

The protein belongs to the PA-PLA1 family. As to quaternary structure, forms homooligomers and, to a much smaller extent, heterooligomers with DDHD2. Interacts with SEC23A and SEC24C. Expressed in mature testis.

The protein localises to the cytoplasm. The catalysed reaction is a 1,2-diacyl-sn-glycero-3-phosphate + H2O = a 2-acyl-sn-glycerol 3-phosphate + a fatty acid + H(+). It carries out the reaction a 1,2-diacyl-sn-glycero-3-phospho-(1D-myo-inositol) + H2O = a 2-acyl-sn-glycero-3-phospho-D-myo-inositol + a fatty acid + H(+). The enzyme catalyses 1-octadecanoyl-2-(5Z,8Z,11Z,14Z-eicosatetraenoyl)-sn-glycero-3-phospho-(1D-myo-inositol) + H2O = 2-(5Z,8Z,11Z,14Z-eicosatetraenoyl)-sn-glycero-3-phospho-(1D-myo-inositol) + octadecanoate + H(+). It catalyses the reaction a 1-acyl-2-(5Z,8Z,11Z,14Z-eicosatetraenoyl)-sn-glycero-3-phospho-(1D-myo-inositol) + H2O = 2-(5Z,8Z,11Z,14Z-eicosatetraenoyl)-sn-glycero-3-phospho-(1D-myo-inositol) + a fatty acid + H(+). The catalysed reaction is 1,2-dihexadecanoyl-sn-glycero-3-phospho-(1D-myo-inositol) + H2O = 2-hexadecanoyl-sn-glycero-3-phospho-(1D-myo-inositol) + hexadecanoate + H(+). It carries out the reaction 1,2-di-(9Z-octadecenoyl)-sn-glycero-3-phosphate + H2O = 2-(9Z-octadecenoyl)-sn-glycero-3-phosphate + (9Z)-octadecenoate + H(+). The enzyme catalyses a 1-acyl-2-(5Z,8Z,11Z,14Z)-eicosatetraenoyl-sn-glycero-3-phosphate + H2O = 2-(5Z,8Z,11Z,14Z-eicosatetraenoyl)-sn-glycero-3-phosphate + a fatty acid + H(+). It catalyses the reaction 1-hexadecanoyl-2-(9Z-octadecenoyl)-sn-glycero-3-phosphate + H2O = 2-(9Z-octadecenoyl)-sn-glycero-3-phosphate + hexadecanoate + H(+). The catalysed reaction is 1-hexadecanoyl-2-(9Z-octadecenoyl)-sn-glycero-3-phospho-L-serine + H2O = 2-(9Z-octadecenoyl)-sn-glycero-3-phospho-L-serine + hexadecanoate + H(+). It carries out the reaction 1,2-di-(5Z,8Z,11Z,14Z)-eicosatetraenoyl-sn-glycero-3-phosphate + H2O = 2-(5Z,8Z,11Z,14Z-eicosatetraenoyl)-sn-glycero-3-phosphate + (5Z,8Z,11Z,14Z)-eicosatetraenoate + H(+). The enzyme catalyses 1-octadecanoyl-2-(5Z,8Z,11Z,14Z-eicosatetraenoyl)-sn-glycero-3-phosphate + H2O = 2-(5Z,8Z,11Z,14Z-eicosatetraenoyl)-sn-glycero-3-phosphate + octadecanoate + H(+). It catalyses the reaction a 1,2-diacyl-sn-glycero-3-phosphocholine + H2O = a 2-acyl-sn-glycero-3-phosphocholine + a fatty acid + H(+). The catalysed reaction is a 1,2-diacyl-sn-glycero-3-phosphoethanolamine + H2O = a 2-acyl-sn-glycero-3-phosphoethanolamine + a fatty acid + H(+). It carries out the reaction a 1,2-diacyl-sn-glycero-3-phospho-L-serine + H2O = a 2-acyl-sn-glycero-3-phospho-L-serine + a fatty acid + H(+). The enzyme catalyses a 1,2-diacyl-sn-glycero-3-phospho-(1'-sn-glycerol) + H2O = 2-acyl-sn-glycero-3-phospho-(1'-sn-glycerol) + a fatty acid + H(+). It catalyses the reaction 1-hexadecanoyl-2-(9Z-octadecenoyl)-sn-glycero-3-phospho-(1'-sn-glycerol) + H2O = 2-(9Z-octadecenoyl)-sn-glycero-3-phospho-(1'-sn-glycerol) + hexadecanoate + H(+). The catalysed reaction is 1-acyl-2-(5Z,8Z,11Z,14Z-eicosatetraenoyl)-sn-glycero-3-phosphocholine + H2O = 2-(5Z,8Z,11Z,14Z)-eicosatetraenoyl-sn-glycero-3-phosphocholine + a fatty acid + H(+). It carries out the reaction 1-acyl-2-(5Z,8Z,11Z,14Z)-eicosatetraenoyl-sn-glycero-3-phosphoethanolamine + H2O = 2-(5Z,8Z,11Z,14Z)-eicosatetraenoyl-sn-glycero-3-phosphoethanolamine + a fatty acid + H(+). The enzyme catalyses 1-(9Z-octadecenoyl)-2-(7Z,10Z,13Z,16Z,19Z-docosapentaenoyl)-sn-glycero-3-phospho-1D-myo-inositol + H2O = 2-(7Z,10Z,13Z,16Z,19Z-docosapentaenoyl)-sn-glycero-3-phospho-1D-myo-inositol + (9Z)-octadecenoate + H(+). It catalyses the reaction 1-(9Z-octadecenoyl)-2-(5Z,8Z,11Z,14Z-eicosatetraenoyl)-sn-glycero-3-phospho-1D-myo-inositol + H2O = 2-(5Z,8Z,11Z,14Z-eicosatetraenoyl)-sn-glycero-3-phospho-(1D-myo-inositol) + (9Z)-octadecenoate + H(+). The catalysed reaction is 1,2-di-(9Z-octadecenoyl)-sn-glycero-3-phospho-1D-myo-inositol + H2O = 2-(9Z-octadecenoyl)-sn-glycero-3-phospho-1D-myo-inositol + (9Z)-octadecenoate + H(+). It carries out the reaction 1-(9Z-octadecenoyl)-2-(8Z,11Z,14Z-eicosatrienoyl)-sn-glycero-3-phospho-1D-myo-inositol + H2O = 2-(8Z,11Z,14Z-eicosatrienoyl)-sn-glycero-3-phospho-1D-myo-inositol + (9Z)-octadecenoate + H(+). The enzyme catalyses 1,2-di-(9Z-octadecenoyl)-sn-glycero-3-phosphocholine + H2O = (9Z-octadecenoyl)-sn-glycero-3-phosphocholine + (9Z)-octadecenoate + H(+). The protein operates within phospholipid metabolism; phosphatidylinositol metabolism. In terms of biological role, phospholipase A1 (PLA1) that hydrolyzes ester bonds at the sn-1 position of glycerophospholipids producing a free fatty acid and a lysophospholipid. Prefers phosphatidate (1,2-diacyl-sn-glycero-3-phosphate, PA) as substrate in vitro, but can efficiently hydrolyze phosphatidylinositol (1,2-diacyl-sn-glycero-3-phospho-(1D-myo-inositol), PI), as well as a range of other glycerophospholipid substrates such as phosphatidylcholine (1,2-diacyl-sn-glycero-3-phosphocholine, PC), phosphatidylethanolamine (1,2-diacyl-sn-glycero-3-phosphoethanolamine, PE), phosphatidylserine (1,2-diacyl-sn-glycero-3-phospho-L-serine, PS) and phosphatidylglycerol (1,2-diacyl-sn-glycero-3-phospho-(1'-sn-glycerol), PG). Involved in the regulation of the endogenous content of polyunsaturated PI and PS lipids in the nervous system. Changes in these lipids extend to downstream metabolic products like PI phosphates PIP and PIP2, which play fundamental roles in cell biology. Regulates mitochondrial morphology. These dynamic changes may be due to PA hydrolysis at the mitochondrial surface. May play a regulatory role in spermatogenesis or sperm function. The polypeptide is Phospholipase DDHD1 (DDHD1) (Bos taurus (Bovine)).